A 21-amino-acid chain; its full sequence is Antimicrobial peptide scolopin-1 (21 aa).

Expressed by the venom gland.

It is found in the secreted. Its function is as follows. Antimicrobial peptide against both Gram-positive, -negative and yeast. Also induces histamine release by mast cells and shows moderate hemolytic activities against both human and rabbit red cells. The sequence is that of Antimicrobial peptide scolopin-1 from Scolopendra mutilans (Chinese red-headed centipede).